We begin with the raw amino-acid sequence, 244 residues long: Probable phosphatase NT01CX_1282 (244 aa).

Residues histidine 8, histidine 10, histidine 16, histidine 41, glutamate 74, histidine 102, histidine 132, aspartate 193, and histidine 195 each coordinate Zn(2+).

The protein belongs to the PHP family. Zn(2+) is required as a cofactor.

The protein is Probable phosphatase NT01CX_1282 of Clostridium novyi (strain NT).